A 314-amino-acid polypeptide reads, in one-letter code: Probable dimethyladenosine transferase (314 aa).

S-adenosyl-L-methionine-binding residues include H36, L38, G63, E84, D112, and N127.

Belongs to the class I-like SAM-binding methyltransferase superfamily. rRNA adenine N(6)-methyltransferase family. In terms of assembly, part of the small subunit (SSU) processome, composed of more than 70 proteins and the RNA chaperone small nucleolar RNA (snoRNA) U3.

It is found in the nucleus. The protein resides in the nucleoplasm. Its subcellular location is the nucleolus. It catalyses the reaction adenosine(1779)/adenosine(1780) in 18S rRNA + 4 S-adenosyl-L-methionine = N(6)-dimethyladenosine(1779)/N(6)-dimethyladenosine(1780) in 18S rRNA + 4 S-adenosyl-L-homocysteine + 4 H(+). Specifically dimethylates two adjacent adenosines in the loop of a conserved hairpin near the 3'-end of 18S rRNA in the 40S particle. Involved in the pre-rRNA processing steps leading to small-subunit rRNA production independently of its RNA-modifying catalytic activity. Part of the small subunit (SSU) processome, first precursor of the small eukaryotic ribosomal subunit. During the assembly of the SSU processome in the nucleolus, many ribosome biogenesis factors, an RNA chaperone and ribosomal proteins associate with the nascent pre-rRNA and work in concert to generate RNA folding, modifications, rearrangements and cleavage as well as targeted degradation of pre-ribosomal RNA by the RNA exosome. The protein is Probable dimethyladenosine transferase (dimt1) of Dictyostelium discoideum (Social amoeba).